A 122-amino-acid polypeptide reads, in one-letter code: Guanine nucleotide exchange factor MSS4 homolog (122 aa).

The 112-residue stretch at 9-120 folds into the MSS4 domain; it reads EQITDGKNKS…YLALKRVVHK (112 aa). Positions 22, 25, 92, and 95 each coordinate Zn(2+).

This sequence belongs to the DSS4/MSS4 family. As to quaternary structure, interacts with Rab8.

It localises to the basal cell membrane. In terms of biological role, guanine-nucleotide-releasing protein that acts on members of the sec4/ypt1/rab subfamily such as Rab8. During egg development, essential for establishing and maintaining epithelial cell polarity by regulating the correct polarized deposition of basal membrane (BM) proteins such as trol/Pcan and vkg/Coll IV to the basal surface of follicular epithelial (FE) cells. Likely to function by restricting the activity of the vesicle transport regulator Rab8 to the basal membrane, and thus directs BM protein-containing vesicles to the basal side of the FE cells. This function is independent of the Crag/Rab10 regulation of polarized BM protein secretion in the FE. This Drosophila melanogaster (Fruit fly) protein is Guanine nucleotide exchange factor MSS4 homolog.